We begin with the raw amino-acid sequence, 273 residues long: 2,3,4,5-tetrahydropyridine-2,6-dicarboxylate N-succinyltransferase (273 aa).

Positions 105 and 142 each coordinate substrate.

The protein belongs to the transferase hexapeptide repeat family. In terms of assembly, homotrimer.

It localises to the cytoplasm. It carries out the reaction (S)-2,3,4,5-tetrahydrodipicolinate + succinyl-CoA + H2O = (S)-2-succinylamino-6-oxoheptanedioate + CoA. It functions in the pathway amino-acid biosynthesis; L-lysine biosynthesis via DAP pathway; LL-2,6-diaminopimelate from (S)-tetrahydrodipicolinate (succinylase route): step 1/3. The polypeptide is 2,3,4,5-tetrahydropyridine-2,6-dicarboxylate N-succinyltransferase (Bordetella bronchiseptica (strain ATCC BAA-588 / NCTC 13252 / RB50) (Alcaligenes bronchisepticus)).